A 354-amino-acid chain; its full sequence is NADH-quinone oxidoreductase subunit H (354 aa).

The next 8 membrane-spanning stretches (helical) occupy residues 25-45, 91-111, 126-146, 170-190, 205-225, 253-273, 290-310, and 330-350; these read LVRI…LILW, WLYL…WAVI, LLYA…AGWA, MGFA…SEIV, FLSW…ISGI, MAFA…SALA, FIPG…VFIW, and VFLP…MSPL.

The protein belongs to the complex I subunit 1 family. As to quaternary structure, NDH-1 is composed of 14 different subunits. Subunits NuoA, H, J, K, L, M, N constitute the membrane sector of the complex.

The protein localises to the cell inner membrane. The enzyme catalyses a quinone + NADH + 5 H(+)(in) = a quinol + NAD(+) + 4 H(+)(out). Its function is as follows. NDH-1 shuttles electrons from NADH, via FMN and iron-sulfur (Fe-S) centers, to quinones in the respiratory chain. The immediate electron acceptor for the enzyme in this species is believed to be ubiquinone. Couples the redox reaction to proton translocation (for every two electrons transferred, four hydrogen ions are translocated across the cytoplasmic membrane), and thus conserves the redox energy in a proton gradient. This subunit may bind ubiquinone. This is NADH-quinone oxidoreductase subunit H from Burkholderia thailandensis (strain ATCC 700388 / DSM 13276 / CCUG 48851 / CIP 106301 / E264).